The sequence spans 106 residues: uncharacterized protein (106 aa).

This is an uncharacterized protein from Enterobacteria phage T4 (Bacteriophage T4).